Consider the following 213-residue polypeptide: Adenylate kinase (213 aa).

10-15 (GAGKGT) contributes to the ATP binding site. Positions 30-59 (STGDMFRAAMANQTEMGVLAKSYIDKGDLV) are NMP. AMP is bound by residues Thr-31, Arg-36, 57 to 59 (DLV), 86 to 89 (GYPR), and Gln-93. Residues 127 to 160 (GRIINKKTGETFHKIFNPPVGDYKEEDFYQREDD) are LID. Residues Arg-128 and 137–138 (TF) contribute to the ATP site. Arg-157 and Arg-168 together coordinate AMP. Lys-196 serves as a coordination point for ATP.

It belongs to the adenylate kinase family. In terms of assembly, monomer.

The protein resides in the cytoplasm. The enzyme catalyses AMP + ATP = 2 ADP. Its pathway is purine metabolism; AMP biosynthesis via salvage pathway; AMP from ADP: step 1/1. Catalyzes the reversible transfer of the terminal phosphate group between ATP and AMP. Plays an important role in cellular energy homeostasis and in adenine nucleotide metabolism. The sequence is that of Adenylate kinase from Streptococcus equi subsp. zooepidemicus (strain H70).